The sequence spans 180 residues: Large ribosomal subunit protein eL20 (180 aa).

This sequence belongs to the eukaryotic ribosomal protein eL20 family.

The polypeptide is Large ribosomal subunit protein eL20 (Caenorhabditis elegans).